A 708-amino-acid polypeptide reads, in one-letter code: MATTAELFEEPFVADEYIERLVWRTPGGGSRGGPEAFDPKRLLEEFVNHIQELQIMDERIQRKVEKLEQQCQKEAKEFAKKVQELQKSNQVAFQHFQELDEHISYVATKVCHLGDQLEGVNTPRQRAVEAQKLMKYFNEFLDGELKSDVFTNPEKIKEAADVIQKLHLIAQELPFDRFSEVKSKIASKYHDLECQLIQEFTSAQRRGEVSRMREVAAVLLHFKGYSHCIDVYIKQCQEGAYLRNDIFEDAAILCQRVNKQVGDIFSNPEAVLAKLIQNVFEVKLQSFVKDQLEECRKSDAEQYLKSLYDLYTRTTSLSSKLMEFNLGTDKQTFLSKLIKSIFVSYLENYIEVEIGYLKSRSAMILQRYYDSKNHQKRSIGTGGIQDLKERIRQRTNLPLGPSIDTHGETFLSQEVVVNLLQETKQAFERCHRLSDPSDLPRNAFRIFTILVEFLCIEHIDYALETGLAGIPSSDSRNANLYFLDVVQQANTIFHLFDKQFNDHLMPLISSSPKLSECLQKKKEIIEQMEMKLDTGIDRTLNCMIGQMKHILAAEQKKTDFKPEDENNVLIQYTNACVKVCAYVRKQVEKIKNSMDGKNVDTVLMELGVRFHRLTYEHLQQYSYSCMGGMLAICDVAEYRKCAKDFKIPMVLHLFDTLHALCNLLVVAPDNLKQVCSGEQLANLDKNILHSFVQLRADYRSARLARHFS.

The residue at position 2 (alanine 2) is an N-acetylalanine. Residues 40-101 are a coiled coil; the sequence is KRLLEEFVNH…AFQHFQELDE (62 aa). Threonine 122, threonine 395, and threonine 405 each carry phosphothreonine. At serine 412 the chain carries Phosphoserine.

This sequence belongs to the SEC10 family. In terms of assembly, the exocyst complex is composed of EXOC1, EXOC2, EXOC3, EXOC4, EXOC5, EXOC6, EXOC7 and EXOC8. Interacts with EXOC3L1. Ubiquitous.

Its subcellular location is the cytoplasm. It localises to the midbody. Component of the exocyst complex involved in the docking of exocytic vesicles with fusion sites on the plasma membrane. The sequence is that of Exocyst complex component 5 (Exoc5) from Rattus norvegicus (Rat).